Reading from the N-terminus, the 75-residue chain is Protein SlyX homolog (75 aa).

It belongs to the SlyX family.

This is Protein SlyX homolog from Vibrio vulnificus (strain CMCP6).